The sequence spans 306 residues: UDP-N-acetylenolpyruvoylglucosamine reductase (306 aa).

An FAD-binding PCMH-type domain is found at 34–198 (VGGPADLLIT…LEVTFKLHNS (165 aa)). Arg177 is an active-site residue. Ser227 acts as the Proton donor in catalysis. Glu297 is an active-site residue.

Belongs to the MurB family. It depends on FAD as a cofactor.

It is found in the cytoplasm. The enzyme catalyses UDP-N-acetyl-alpha-D-muramate + NADP(+) = UDP-N-acetyl-3-O-(1-carboxyvinyl)-alpha-D-glucosamine + NADPH + H(+). It participates in cell wall biogenesis; peptidoglycan biosynthesis. Functionally, cell wall formation. The chain is UDP-N-acetylenolpyruvoylglucosamine reductase from Clostridium botulinum (strain ATCC 19397 / Type A).